A 305-amino-acid polypeptide reads, in one-letter code: MSSRVCPQRPVAKSSGDAKVLLIVSTYKPRAAVLAADVVNFLSIRGFQCHTIEYDGLNKESCARAGYMFAVSIGGDGTTLFAARCASPSGIPILAINLGRFGFIAPIEPRYWQQALSDYLAGGVRPAERALISCTVTRAGKEIASCLALNDVVLSSGRVARLTRAEVCFNDISFGVYEADGIILATPTGSTAYSAACGGPILDPDLDAFVLTPISALCLSNRPVVVPSSGVVRIKVLSMRHKETVLSVDGHELCTLQEEDQLLASRSSCSARLVFCTPHVFYHALCSKLAWSGSIFSRRGRRHDD.

D76 (proton acceptor) is an active-site residue. NAD(+)-binding positions include 76-77 (DG), 150-151 (ND), R161, and D180.

It belongs to the NAD kinase family. A divalent metal cation serves as cofactor.

The protein resides in the cytoplasm. The catalysed reaction is NAD(+) + ATP = ADP + NADP(+) + H(+). Its function is as follows. Involved in the regulation of the intracellular balance of NAD and NADP, and is a key enzyme in the biosynthesis of NADP. Catalyzes specifically the phosphorylation on 2'-hydroxyl of the adenosine moiety of NAD to yield NADP. The sequence is that of NAD kinase from Treponema pallidum (strain Nichols).